A 376-amino-acid chain; its full sequence is Chaperone protein DnaJ (376 aa).

The J domain occupies 5–70; the sequence is DFYETLGVAK…QKRAAYDRYG (66 aa). The CR-type zinc-finger motif lies at 137-215; that stretch reads GKTAQIRVPT…CHGQGRVTEE (79 aa). Zn(2+) contacts are provided by Cys-150, Cys-153, Cys-167, Cys-170, Cys-189, Cys-192, Cys-203, and Cys-206. 4 CXXCXGXG motif repeats span residues 150–157, 167–174, 189–196, and 203–210; these read CDVCSGSG, CGTCQGSG, CPTCHGRG, and CPKCHGQG.

The protein belongs to the DnaJ family. Homodimer. It depends on Zn(2+) as a cofactor.

It is found in the cytoplasm. Participates actively in the response to hyperosmotic and heat shock by preventing the aggregation of stress-denatured proteins and by disaggregating proteins, also in an autonomous, DnaK-independent fashion. Unfolded proteins bind initially to DnaJ; upon interaction with the DnaJ-bound protein, DnaK hydrolyzes its bound ATP, resulting in the formation of a stable complex. GrpE releases ADP from DnaK; ATP binding to DnaK triggers the release of the substrate protein, thus completing the reaction cycle. Several rounds of ATP-dependent interactions between DnaJ, DnaK and GrpE are required for fully efficient folding. Also involved, together with DnaK and GrpE, in the DNA replication of plasmids through activation of initiation proteins. This chain is Chaperone protein DnaJ, found in Rhizobium leguminosarum bv. trifolii (strain WSM2304).